The following is a 285-amino-acid chain: Acetyl-coenzyme A carboxylase carboxyl transferase subunit beta 2 (285 aa).

The interval 1–20 (MAIRSLFSGNRKKKEDGQEK) is disordered. The CoA carboxyltransferase N-terminal domain maps to 26–285 (LMTKCPECRH…MHTKGGVQHV (260 aa)). Residues Cys30, Cys33, Cys49, and Cys52 each contribute to the Zn(2+) site. A C4-type zinc finger spans residues 30 to 52 (CPECRHIQLTKELEKNHKVCTKC).

The protein belongs to the AccD/PCCB family. Acetyl-CoA carboxylase is a heterohexamer composed of biotin carboxyl carrier protein (AccB), biotin carboxylase (AccC) and two subunits each of ACCase subunit alpha (AccA) and ACCase subunit beta (AccD). The cofactor is Zn(2+).

The protein localises to the cytoplasm. The enzyme catalyses N(6)-carboxybiotinyl-L-lysyl-[protein] + acetyl-CoA = N(6)-biotinyl-L-lysyl-[protein] + malonyl-CoA. It participates in lipid metabolism; malonyl-CoA biosynthesis; malonyl-CoA from acetyl-CoA: step 1/1. In terms of biological role, component of the acetyl coenzyme A carboxylase (ACC) complex. Biotin carboxylase (BC) catalyzes the carboxylation of biotin on its carrier protein (BCCP) and then the CO(2) group is transferred by the transcarboxylase to acetyl-CoA to form malonyl-CoA. The polypeptide is Acetyl-coenzyme A carboxylase carboxyl transferase subunit beta 2 (Lysinibacillus sphaericus (strain C3-41)).